The following is a 545-amino-acid chain: MTTRYIFVTGGVVSSLGKGIAAASLAAILEARGLNVTIMKLDPYINVDPGTMSPTQHGEVFVTEDGAETDLDLGHYERFIRTKMNRRNNFTTGRIYEEVLRKERRGDYLGATIQVIPHITNAIKEKVLAGGEGHDVAIVEIGGTVGDIESLPFLESIRQLGVELGRDRTLFMHLTLVPFLGAAGEVKTKPTQHSVKELRSIGIAPDVLICRGDRAIPANERAKISLFCNVEERAVISLKDVDSIYKIPALLRSQGLDDLVVKRFGLECREADLSEWENVIYQEANPNGEVVIGMVGKYIELPDAYKSVNEALKHAGLKNRVSVTIKYIDSQTVEAKGDEVLQGLDGILVPGGFGERGVEGKILAAKFARENKLPYFGICLGMQVALIEFARNVAGMTDAHSTEFNKETPFPVVGLITEWVDEEGNVEQRHEASDLGGTMRLGAQLCHLLEGSKAAQAYKGNSCIERHRHRYEVNNKYRERLEQAGMVFSGLSSDRKLVEMIELKDHPWFVAGQFHPEFTSTPRDGHPLFEGFIAAASAHQKRDLK.

Positions 1 to 266 (MTTRYIFVTG…DDLVVKRFGL (266 aa)) are amidoligase domain. Ser-14 is a binding site for CTP. Position 14 (Ser-14) interacts with UTP. ATP contacts are provided by residues 15 to 20 (SLGKGI) and Asp-72. Mg(2+) is bound by residues Asp-72 and Glu-140. Residues 147–149 (DIE), 187–192 (KTKPTQ), and Lys-223 each bind CTP. UTP contacts are provided by residues 187-192 (KTKPTQ) and Lys-223. 239-241 (KDV) is a binding site for ATP. The Glutamine amidotransferase type-1 domain occupies 291 to 542 (VIGMVGKYIE…IAAASAHQKR (252 aa)). Gly-352 contacts L-glutamine. Cys-379 functions as the Nucleophile; for glutamine hydrolysis in the catalytic mechanism. Residues 380–383 (LGMQ), Glu-403, and Arg-470 contribute to the L-glutamine site. Residues His-515 and Glu-517 contribute to the active site.

It belongs to the CTP synthase family. In terms of assembly, homotetramer.

It carries out the reaction UTP + L-glutamine + ATP + H2O = CTP + L-glutamate + ADP + phosphate + 2 H(+). The catalysed reaction is L-glutamine + H2O = L-glutamate + NH4(+). It catalyses the reaction UTP + NH4(+) + ATP = CTP + ADP + phosphate + 2 H(+). It participates in pyrimidine metabolism; CTP biosynthesis via de novo pathway; CTP from UDP: step 2/2. With respect to regulation, allosterically activated by GTP, when glutamine is the substrate; GTP has no effect on the reaction when ammonia is the substrate. The allosteric effector GTP functions by stabilizing the protein conformation that binds the tetrahedral intermediate(s) formed during glutamine hydrolysis. Inhibited by the product CTP, via allosteric rather than competitive inhibition. Functionally, catalyzes the ATP-dependent amination of UTP to CTP with either L-glutamine or ammonia as the source of nitrogen. Regulates intracellular CTP levels through interactions with the four ribonucleotide triphosphates. This is CTP synthase from Shewanella putrefaciens (strain CN-32 / ATCC BAA-453).